Consider the following 195-residue polypeptide: Probable GTP-binding protein EngB (195 aa).

An EngB-type G domain is found at Gln22–Arg195. Residues Gly30–Ser37, Gly57–Thr61, Asp75–Gly78, Thr142–Asp145, and Phe174–Ala176 contribute to the GTP site. Residues Ser37 and Thr59 each contribute to the Mg(2+) site.

This sequence belongs to the TRAFAC class TrmE-Era-EngA-EngB-Septin-like GTPase superfamily. EngB GTPase family. It depends on Mg(2+) as a cofactor.

In terms of biological role, necessary for normal cell division and for the maintenance of normal septation. This is Probable GTP-binding protein EngB from Oceanobacillus iheyensis (strain DSM 14371 / CIP 107618 / JCM 11309 / KCTC 3954 / HTE831).